We begin with the raw amino-acid sequence, 222 residues long: Glutathione S-transferase A1 (222 aa).

An N-acetylmethionine modification is found at methionine 1. An N-acetylalanine; in Glutathione S-transferase A1, N-terminally processed modification is found at alanine 2. One can recognise a GST N-terminal domain in the interval 3-83 (EKPKLHYFNA…YIASKYNLYG (81 aa)). At lysine 4 the chain carries N6-succinyllysine. Glutathione-binding positions include tyrosine 9, arginine 45, 54-55 (QV), and 67-68 (QT). The GST C-terminal domain occupies 85-207 (DIKERALIDM…LQPGSPRKPP (123 aa)).

This sequence belongs to the GST superfamily. Alpha family. As to quaternary structure, homodimer or heterodimer of GSTA1 and GSTA2. In terms of tissue distribution, liver.

The protein localises to the cytoplasm. It carries out the reaction RX + glutathione = an S-substituted glutathione + a halide anion + H(+). The catalysed reaction is prostaglandin A2 + glutathione = prostaglandin A2-S-(R)-glutathione. It catalyses the reaction prostaglandin J2 + glutathione = prostaglandin J2-S-(R)-glutathione. The enzyme catalyses (13S)-hydroperoxy-(9Z,11E)-octadecadienoate + 2 glutathione = (13S)-hydroxy-(9Z,11E)-octadecadienoate + glutathione disulfide + H2O. It carries out the reaction androst-5-ene-3,17-dione = androst-4-ene-3,17-dione. Its activity is regulated as follows. The isomerase activity is inhibited by S-methylglutathione (GSMe). In terms of biological role, glutathione S-transferase that catalyzes the nucleophilic attack of the sulfur atom of glutathione on the electrophilic groups of a wide range of exogenous and endogenous compounds. Involved in the formation of glutathione conjugates of both prostaglandin A2 (PGA2) and prostaglandin J2 (PGJ2). It also catalyzes the isomerization of D5-androstene-3,17-dione (AD) into D4-androstene-3,17-dione and may therefore play an important role in hormone biosynthesis. Through its glutathione-dependent peroxidase activity toward the fatty acid hydroperoxide (13S)-hydroperoxy-(9Z,11E)-octadecadienoate/13-HPODE it is also involved in the metabolism of oxidized linoleic acid. This Homo sapiens (Human) protein is Glutathione S-transferase A1 (GSTA1).